The following is a 281-amino-acid chain: MVLTHNVLAVTFGVLGNIISFIVFLAPVPTFVRICKKKSIEGFESLPYVSALFSAMLWIYYALQKDGAGFLLITINAVGCFIETIYIILFITYANKKARISTLKVLGLLNFLGFAAIILVCELLTKGSNREKVLGGICVGFSVCVFAAPLSIMRVVIRTKSVEFMPFSLSLFLTISAITWLFYGLAIKDFYVALPNILGAFLGAVQMILYVIFKYYKTPLVVDETEKPKTVSDHSINMVKLSSTPASGDLTVQPQTNPDVSHPIKTHGGDLEDQMDKKMPN.

Over 1–6 (MVLTHN) the chain is Extracellular. A helical transmembrane segment spans residues 7–27 (VLAVTFGVLGNIISFIVFLAP). Residues 11 to 97 (TFGVLGNIIS…ILFITYANKK (87 aa)) enclose the MtN3/slv 1 domain. Over 28–42 (VPTFVRICKKKSIEG) the chain is Cytoplasmic. Residues 43-63 (FESLPYVSALFSAMLWIYYAL) form a helical membrane-spanning segment. Topologically, residues 64–70 (QKDGAGF) are extracellular. The helical transmembrane segment at 71–91 (LLITINAVGCFIETIYIILFI) threads the bilayer. The Cytoplasmic portion of the chain corresponds to 92–104 (TYANKKARISTLK). A helical transmembrane segment spans residues 105-125 (VLGLLNFLGFAAIILVCELLT). Residues 126–132 (KGSNREK) lie on the Extracellular side of the membrane. The helical transmembrane segment at 133 to 153 (VLGGICVGFSVCVFAAPLSIM) threads the bilayer. The MtN3/slv 2 domain maps to 133–216 (VLGGICVGFS…MILYVIFKYY (84 aa)). Over 154 to 166 (RVVIRTKSVEFMP) the chain is Cytoplasmic. A helical membrane pass occupies residues 167-187 (FSLSLFLTISAITWLFYGLAI). The Extracellular segment spans residues 188-192 (KDFYV). Residues 193-213 (ALPNILGAFLGAVQMILYVIF) form a helical membrane-spanning segment. The Cytoplasmic segment spans residues 214–281 (KYYKTPLVVD…EDQMDKKMPN (68 aa)). Positions 244-259 (TPASGDLTVQPQTNPD) are enriched in polar residues. A disordered region spans residues 244–281 (TPASGDLTVQPQTNPDVSHPIKTHGGDLEDQMDKKMPN). The span at 267–281 (HGGDLEDQMDKKMPN) shows a compositional bias: basic and acidic residues.

It belongs to the SWEET sugar transporter family. As to quaternary structure, forms homooligomers and/or heterooligomers.

The protein localises to the cell membrane. Functionally, mediates both low-affinity uptake and efflux of sugar across the plasma membrane. The protein is Bidirectional sugar transporter SWEET14 of Arabidopsis thaliana (Mouse-ear cress).